The primary structure comprises 663 residues: DNA topoisomerase 4 subunit B (663 aa).

ATP is bound by residues Tyr-7, Asn-47, Asp-74, Gly-114 to Ala-120, and Lys-341. Residues Arg-386–Ser-418 are disordered. Basic and acidic residues predominate over residues Glu-387 to Ser-398. The Toprim domain occupies Asn-424–Pro-538. Mg(2+) is bound by residues Glu-430, Asp-503, and Asp-505.

It belongs to the type II topoisomerase family. ParE type 2 subfamily. Heterotetramer composed of ParC and ParE. Mg(2+) is required as a cofactor. The cofactor is Mn(2+). Requires Ca(2+) as cofactor.

The catalysed reaction is ATP-dependent breakage, passage and rejoining of double-stranded DNA.. Its function is as follows. Topoisomerase IV is essential for chromosome segregation. It relaxes supercoiled DNA. Performs the decatenation events required during the replication of a circular DNA molecule. In Staphylococcus aureus (strain MRSA252), this protein is DNA topoisomerase 4 subunit B.